The sequence spans 400 residues: Phosphoglycerate kinase (400 aa).

Substrate is bound by residues 24–26 (DFN), Arg40, 63–66 (HFGR), Arg121, and Arg154. ATP-binding positions include Lys205, Gly296, Glu327, and 356–359 (GGDS).

Belongs to the phosphoglycerate kinase family. In terms of assembly, monomer.

Its subcellular location is the cytoplasm. The enzyme catalyses (2R)-3-phosphoglycerate + ATP = (2R)-3-phospho-glyceroyl phosphate + ADP. It functions in the pathway carbohydrate degradation; glycolysis; pyruvate from D-glyceraldehyde 3-phosphate: step 2/5. The polypeptide is Phosphoglycerate kinase (Nostoc punctiforme (strain ATCC 29133 / PCC 73102)).